The primary structure comprises 110 residues: uncharacterized protein (110 aa).

Residues 18–34 (MFPLISTFTSIGLGVLM) form a helical membrane-spanning segment.

The protein localises to the membrane. This is an uncharacterized protein from Saccharomyces cerevisiae (strain ATCC 204508 / S288c) (Baker's yeast).